A 358-amino-acid polypeptide reads, in one-letter code: DNA replication and repair protein RecF (358 aa).

33-40 (GENGAGKT) serves as a coordination point for ATP.

This sequence belongs to the RecF family.

It is found in the cytoplasm. Functionally, the RecF protein is involved in DNA metabolism; it is required for DNA replication and normal SOS inducibility. RecF binds preferentially to single-stranded, linear DNA. It also seems to bind ATP. The chain is DNA replication and repair protein RecF from Deinococcus geothermalis (strain DSM 11300 / CIP 105573 / AG-3a).